The primary structure comprises 377 residues: Cytochrome b (377 aa).

The next 4 membrane-spanning stretches (helical) occupy residues 36 to 56 (WGSL…FLAM), 80 to 102 (WLIR…LHMA), 115 to 135 (VWLI…MGYI), and 181 to 201 (FFVL…IHLI). 2 residues coordinate heme b: His86 and His100. Residues His185 and His199 each coordinate heme b. His204 is a binding site for a ubiquinone. 4 consecutive transmembrane segments (helical) span residues 227-247 (YSSK…VIIF), 291-311 (LGGV…PFIS), 326-346 (LFWS…MPVV), and 354-374 (LTST…FLMI).

Belongs to the cytochrome b family. The main subunits of complex b-c1 are: cytochrome b, cytochrome c1 and the Rieske protein. The cofactor is heme b.

It is found in the mitochondrion inner membrane. In terms of biological role, component of the ubiquinol-cytochrome c reductase complex (complex III or cytochrome b-c1 complex) that is part of the mitochondrial respiratory chain. The b-c1 complex mediates electron transfer from ubiquinol to cytochrome c. Contributes to the generation of a proton gradient across the mitochondrial membrane that is then used for ATP synthesis. This is Cytochrome b (mt:Cyt-b) from Myzostoma seymourcollegiorum (Polychaete worm).